Reading from the N-terminus, the 342-residue chain is Methionine import ATP-binding protein MetN (342 aa).

Residues isoleucine 2–valine 241 enclose the ABC transporter domain. Glycine 38 to serine 45 is an ATP binding site.

Belongs to the ABC transporter superfamily. Methionine importer (TC 3.A.1.24) family. In terms of assembly, the complex is composed of two ATP-binding proteins (MetN), two transmembrane proteins (MetI) and a solute-binding protein (MetQ).

It is found in the cell membrane. It carries out the reaction L-methionine(out) + ATP + H2O = L-methionine(in) + ADP + phosphate + H(+). The enzyme catalyses D-methionine(out) + ATP + H2O = D-methionine(in) + ADP + phosphate + H(+). In terms of biological role, part of the ABC transporter complex MetNIQ involved in methionine import. Responsible for energy coupling to the transport system. This chain is Methionine import ATP-binding protein MetN, found in Geobacillus kaustophilus (strain HTA426).